The sequence spans 1171 residues: ATP-dependent helicase/deoxyribonuclease subunit B (1171 aa).

This sequence belongs to the helicase family. AddB/RexB type 2 subfamily. Heterodimer of AddA and RexB. Mg(2+) is required as a cofactor.

In terms of biological role, the heterodimer acts as both an ATP-dependent DNA helicase and an ATP-dependent, dual-direction single-stranded exonuclease. Recognizes the chi site generating a DNA molecule suitable for the initiation of homologous recombination. This subunit has 5' -&gt; 3' nuclease activity but not helicase activity. In Leuconostoc citreum (strain KM20), this protein is ATP-dependent helicase/deoxyribonuclease subunit B.